The primary structure comprises 206 residues: LexA repressor (206 aa).

Positions Val28 to Ala48 form a DNA-binding region, H-T-H motif. Active-site for autocatalytic cleavage activity residues include Ser128 and Lys166.

The protein belongs to the peptidase S24 family. In terms of assembly, homodimer.

It carries out the reaction Hydrolysis of Ala-|-Gly bond in repressor LexA.. Its function is as follows. Represses a number of genes involved in the response to DNA damage (SOS response), including recA and lexA. In the presence of single-stranded DNA, RecA interacts with LexA causing an autocatalytic cleavage which disrupts the DNA-binding part of LexA, leading to derepression of the SOS regulon and eventually DNA repair. In Bacillus pumilus (strain SAFR-032), this protein is LexA repressor.